The primary structure comprises 271 residues: MSDMRLIVAGAGGRMGRALTRAISETKGVVLTGALEAPGSELLGQDAGVLAGLPANGVKLSADLWTLSAGADGILDFTVPAATIANVAIAAQRGIVHVIGTTGLSSSDNAVIKSVTDQAIVVKSGNMSLGVNLLAALTRRVAQSLDAGFDIEIVEMHHRAKIDAPSGTALLLGEAAAAGRKVDLDDHSARGRDGVTGARKTGDIGFASLRGGTVTGDHSVIFAGPYERIELAHKAEDRMIFAHGALKAAQWAHGKSPGLYSMMDVLGLAEF.

NAD(+)-binding positions include 10-15 (GAGGRM), Glu36, 100-102 (GTT), and 124-127 (SGNM). His157 (proton donor/acceptor) is an active-site residue. Position 158 (His158) interacts with (S)-2,3,4,5-tetrahydrodipicolinate. Lys161 acts as the Proton donor in catalysis. Residue 167-168 (GT) participates in (S)-2,3,4,5-tetrahydrodipicolinate binding.

The protein belongs to the DapB family.

It localises to the cytoplasm. It catalyses the reaction (S)-2,3,4,5-tetrahydrodipicolinate + NAD(+) + H2O = (2S,4S)-4-hydroxy-2,3,4,5-tetrahydrodipicolinate + NADH + H(+). The enzyme catalyses (S)-2,3,4,5-tetrahydrodipicolinate + NADP(+) + H2O = (2S,4S)-4-hydroxy-2,3,4,5-tetrahydrodipicolinate + NADPH + H(+). It functions in the pathway amino-acid biosynthesis; L-lysine biosynthesis via DAP pathway; (S)-tetrahydrodipicolinate from L-aspartate: step 4/4. Catalyzes the conversion of 4-hydroxy-tetrahydrodipicolinate (HTPA) to tetrahydrodipicolinate. This is 4-hydroxy-tetrahydrodipicolinate reductase from Rhodopseudomonas palustris (strain BisB5).